The sequence spans 122 residues: UPF0102 protein RL0336 (122 aa).

The protein belongs to the UPF0102 family.

The chain is UPF0102 protein RL0336 from Rhizobium johnstonii (strain DSM 114642 / LMG 32736 / 3841) (Rhizobium leguminosarum bv. viciae).